A 277-amino-acid chain; its full sequence is 4-hydroxy-3-methylbut-2-enyl diphosphate reductase (277 aa).

Residue Cys12 coordinates [4Fe-4S] cluster. His36 and His70 together coordinate (2E)-4-hydroxy-3-methylbut-2-enyl diphosphate. Positions 36 and 70 each coordinate dimethylallyl diphosphate. The isopentenyl diphosphate site is built by His36 and His70. A [4Fe-4S] cluster-binding site is contributed by Cys92. His120 provides a ligand contact to (2E)-4-hydroxy-3-methylbut-2-enyl diphosphate. His120 lines the dimethylallyl diphosphate pocket. His120 contributes to the isopentenyl diphosphate binding site. Glu122 functions as the Proton donor in the catalytic mechanism. Position 158 (Thr158) interacts with (2E)-4-hydroxy-3-methylbut-2-enyl diphosphate. Cys186 is a binding site for [4Fe-4S] cluster. Residues Ser214, Asn216, and Ser258 each coordinate (2E)-4-hydroxy-3-methylbut-2-enyl diphosphate. Residues Ser214, Asn216, and Ser258 each contribute to the dimethylallyl diphosphate site. The isopentenyl diphosphate site is built by Ser214, Asn216, and Ser258.

This sequence belongs to the IspH family. It depends on [4Fe-4S] cluster as a cofactor.

The catalysed reaction is isopentenyl diphosphate + 2 oxidized [2Fe-2S]-[ferredoxin] + H2O = (2E)-4-hydroxy-3-methylbut-2-enyl diphosphate + 2 reduced [2Fe-2S]-[ferredoxin] + 2 H(+). It carries out the reaction dimethylallyl diphosphate + 2 oxidized [2Fe-2S]-[ferredoxin] + H2O = (2E)-4-hydroxy-3-methylbut-2-enyl diphosphate + 2 reduced [2Fe-2S]-[ferredoxin] + 2 H(+). It functions in the pathway isoprenoid biosynthesis; dimethylallyl diphosphate biosynthesis; dimethylallyl diphosphate from (2E)-4-hydroxy-3-methylbutenyl diphosphate: step 1/1. Its pathway is isoprenoid biosynthesis; isopentenyl diphosphate biosynthesis via DXP pathway; isopentenyl diphosphate from 1-deoxy-D-xylulose 5-phosphate: step 6/6. Its function is as follows. Catalyzes the conversion of 1-hydroxy-2-methyl-2-(E)-butenyl 4-diphosphate (HMBPP) into a mixture of isopentenyl diphosphate (IPP) and dimethylallyl diphosphate (DMAPP). Acts in the terminal step of the DOXP/MEP pathway for isoprenoid precursor biosynthesis. The protein is 4-hydroxy-3-methylbut-2-enyl diphosphate reductase of Campylobacter jejuni subsp. doylei (strain ATCC BAA-1458 / RM4099 / 269.97).